A 76-amino-acid polypeptide reads, in one-letter code: Translation initiation factor IF-1 (76 aa).

Positions 1–72 (MAKKDVVVMQ…NKGRIVKREK (72 aa)) constitute an S1-like domain.

This sequence belongs to the IF-1 family. As to quaternary structure, component of the 30S ribosomal translation pre-initiation complex which assembles on the 30S ribosome in the order IF-2 and IF-3, IF-1 and N-formylmethionyl-tRNA(fMet); mRNA recruitment can occur at any time during PIC assembly.

It is found in the cytoplasm. Functionally, one of the essential components for the initiation of protein synthesis. Stabilizes the binding of IF-2 and IF-3 on the 30S subunit to which N-formylmethionyl-tRNA(fMet) subsequently binds. Helps modulate mRNA selection, yielding the 30S pre-initiation complex (PIC). Upon addition of the 50S ribosomal subunit IF-1, IF-2 and IF-3 are released leaving the mature 70S translation initiation complex. The protein is Translation initiation factor IF-1 of Petrotoga mobilis (strain DSM 10674 / SJ95).